We begin with the raw amino-acid sequence, 265 residues long: Bradykinin-potentiating and C-type natriuretic peptides (265 aa).

The signal sequence occupies residues 1–23 (MVLSRLAASGLLLLALLALSVDG). The propeptide occupies 24–30 (KPVQQWA). Gln31 carries the pyrrolidone carboxylic acid modification. Residues 44 to 50 (LKVQQWA) constitute a propeptide that is removed on maturation. Gln51 bears the Pyrrolidone carboxylic acid mark. Positions 64–70 (LTVQQWA) are excised as a propeptide. The residue at position 71 (Gln71) is a Pyrrolidone carboxylic acid. Residues 81 to 87 (LTVQQWA) constitute a propeptide that is removed on maturation. Gln88 carries the pyrrolidone carboxylic acid modification. A propeptide spanning residues 100–106 (LEVQQWA) is cleaved from the precursor. Residue Gln107 is modified to Pyrrolidone carboxylic acid. Positions 118-120 (APL) are excised as a propeptide. Gln121 carries the post-translational modification Pyrrolidone carboxylic acid. A propeptide is located at residue Val126. At Gln127 the chain carries Pyrrolidone carboxylic acid. A propeptide spanning residues 132 to 241 (LLQPHESPAS…GGARRLKGLA (110 aa)) is cleaved from the precursor. A disordered region spans residues 153–211 (GPEAASGVPSAGAEVGRSGSKAPAAPHRLSKSKGAAATSAASRPMRDLRPDGKQARQNW). Positions 184–194 (SKGAAATSAAS) are enriched in low complexity. A compositionally biased stretch (basic and acidic residues) spans 196-206 (PMRDLRPDGKQ). Cys249 and Cys265 are oxidised to a cystine.

In the N-terminal section; belongs to the bradykinin-potentiating peptide family. It in the C-terminal section; belongs to the natriuretic peptide family. In terms of tissue distribution, expressed by the venom gland.

The protein resides in the secreted. It is found in the cytoplasm. Its subcellular location is the cytosol. Its function is as follows. Modestly inhibits ACE (with highest affinity for the N-site) and reveals strong bradykinin-potentiating activity. Induces nitric oxide (NO) production depended on muscarinic acetylcholine receptor M1 subtype (CHRM1) and bradykinin B2 receptor (BDKRB2) activation. Both these receptors contribute to the vasodilation induced by this peptide that may have an indirect action on BDKRB2 and a direct agonistic action on CHRM1. Functionally, peptide with several activities. It inhibits the activity of the angiotensin-converting enzyme (ACE) by a preferential interaction with its C-domain. It evokes transient hypotension (-14 mmHg) similar to that evoked by 0.5 ug of bradykinin, when injected alone into rats. It has a high bradykinin-potentiating effect (120%), when 60 nmol of BPP-10c are coinjected with 0.5 ug of bradykinin into rats. Does not affect angiotensin-1 pressor effects. Shows potent and long-lasting antihypertensive activity as well as a reduction of the heart rate. It also binds and dose-dependently promotes the activation of cytosolic argininosuccinate synthase (ASS1), an enzyme that catalyzes the conversion of citrulline, L-aspartate and ATP to argininosuccinate, AMP and pyrophosphate. It also enhances ASS1-dependent arginine production in HEK 293 cells, as well as in spontaneous hypertensive rat (SHR) and Wistar rat plasma. In addition, it induces the production of nitric-oxide (NO) by HUVEC cells via the endothelial nitric-oxide synthase (NOS3), which use arginine as a substrate and produce NO. It has been shown to be internalized by ASS1-expressing endothelial (HUVEC) and kidney (HEK 293) cells, and is detected homogenously distributed within the cell cytoplasm for up to 2 hours. In terms of biological role, has a vasorelaxant activity in rat aortic strips and a diuretic potency in anesthetized rats. May act by activating natriuretic receptors (NPR1 and/or NPR2). This Bothrops insularis (Golden lancehead) protein is Bradykinin-potentiating and C-type natriuretic peptides.